The primary structure comprises 285 residues: Tropomyosin alpha-3 chain (285 aa).

Residues 1-285 (MMEAIKKKMQ…DHALNDMTSI (285 aa)) are a coiled coil. Position 2 is an N-acetylmethionine (Met-2). Met-2 is modified (N-acetylalanine). Thr-54 bears the Phosphothreonine mark. A phosphoserine mark is found at Ser-62 and Ser-88. Thr-109 carries the post-translational modification Phosphothreonine. Residues Ser-207 and Ser-216 each carry the phosphoserine modification. Ile-228 carries the N6-acetyllysine modification. Thr-253 is modified (phosphothreonine). Tyr-262 carries the post-translational modification Phosphotyrosine. A Phosphoserine modification is found at Ser-272. At Thr-283 the chain carries Phosphothreonine. Ser-284 carries the post-translational modification Phosphoserine.

It belongs to the tropomyosin family. Homodimer. Heterodimer of an alpha (TPM1, TPM3 or TPM4) and a beta (TPM2) chain. Interacts with TMOD1. Interacts with TNNT1.

It is found in the cytoplasm. The protein resides in the cytoskeleton. Functionally, binds to actin filaments in muscle and non-muscle cells. Plays a central role, in association with the troponin complex, in the calcium dependent regulation of vertebrate striated muscle contraction. Smooth muscle contraction is regulated by interaction with caldesmon. In non-muscle cells is implicated in stabilizing cytoskeleton actin filaments. This chain is Tropomyosin alpha-3 chain (Tpm3), found in Mus musculus (Mouse).